Consider the following 274-residue polypeptide: MLPVAALSGPFAPVLSATSRGVXXXXXXXXXXXXXATPEPPVLDPKRPILSRESLSGQAARRPLVASVGLNVPASVRYSHTDIKVPDFSDYRRSEVLDKTKSSRESSDARKGFSYLVTAATAVGVTYAAKSIVTQFVSSMSASADVLAMSKIEIKLSDIPEGKNMAFKWRGKPLFVRHRTQKEIEQEAAVELSQLRDPQHDLDRVKKPEWMILIGVCTHLGCVPIANAGDFGGYYCPCHGSHYDASGRIRKGPAPLNLEVPTYEFTGDDMVIVG.

The Mitochondrial matrix segment spans residues 79-103 (SHTDIKVPDFSDYRRSEVLDKTKSS). A helical membrane pass occupies residues 104–140 (RESSDARKGFSYLVTAATAVGVTYAAKSIVTQFVSSM). Residues 141-274 (SASADVLAMS…FTGDDMVIVG (134 aa)) are Mitochondrial intermembrane-facing. The Rieske domain maps to 187 to 272 (EAAVELSQLR…YEFTGDDMVI (86 aa)). Residues cysteine 217, histidine 219, cysteine 236, histidine 239, and serine 241 each contribute to the [2Fe-2S] cluster site. Cysteine 222 and cysteine 238 are joined by a disulfide.

This sequence belongs to the Rieske iron-sulfur protein family. Component of the ubiquinol-cytochrome c oxidoreductase (cytochrome b-c1 complex, complex III, CIII), a multisubunit enzyme composed of 11 subunits. The complex is composed of 3 respiratory subunits cytochrome b, cytochrome c1 and Rieske protein UQCRFS1, 2 core protein subunits UQCRC1/QCR1 and UQCRC2/QCR2, and 6 low-molecular weight protein subunits UQCRH/QCR6, UQCRB/QCR7, UQCRQ/QCR8, UQCR10/QCR9, UQCR11/QCR10 and subunit 9, the cleavage product of Rieske protein UQCRFS1. The complex exists as an obligatory dimer and forms supercomplexes (SCs) in the inner mitochondrial membrane with NADH-ubiquinone oxidoreductase (complex I, CI) and cytochrome c oxidase (complex IV, CIV), resulting in different assemblies (supercomplex SCI(1)III(2)IV(1) and megacomplex MCI(2)III(2)IV(2)). Incorporation of the Rieske protein UQCRFS1 is the penultimate step in complex III assembly. Interacts with TTC19, which is involved in the clearance of UQCRFS1 fragments. As to quaternary structure, component of the ubiquinol-cytochrome c oxidoreductase (cytochrome b-c1 complex, complex III, CIII). Subunit 9 corresponds to the mitochondrial targeting sequence (MTS) of Rieske protein UQCRFS1. It is retained after processing and incorporated inside complex III, where it remains bound to the complex and localizes between the 2 core subunits UQCRC1/QCR1 and UQCRC2/QCR2. Requires [2Fe-2S] cluster as cofactor. Post-translationally, proteolytic processing is necessary for the correct insertion of UQCRFS1 in the complex III dimer. Several fragments are generated during UQCRFS1 insertion, most probably due to the endogenous matrix-processing peptidase (MPP) activity of the 2 core protein subunits UQCRC1/QCR1 and UQCRC2/QCR2, which are homologous to the 2 mitochondrial-processing peptidase (MPP) subunits beta-MPP and alpha-MPP respectively. The action of the protease is also necessary for the clearance of the UQCRFS1 fragments.

The protein resides in the mitochondrion inner membrane. The enzyme catalyses a quinol + 2 Fe(III)-[cytochrome c](out) = a quinone + 2 Fe(II)-[cytochrome c](out) + 2 H(+)(out). Component of the ubiquinol-cytochrome c oxidoreductase, a multisubunit transmembrane complex that is part of the mitochondrial electron transport chain which drives oxidative phosphorylation. The respiratory chain contains 3 multisubunit complexes succinate dehydrogenase (complex II, CII), ubiquinol-cytochrome c oxidoreductase (cytochrome b-c1 complex, complex III, CIII) and cytochrome c oxidase (complex IV, CIV), that cooperate to transfer electrons derived from NADH and succinate to molecular oxygen, creating an electrochemical gradient over the inner membrane that drives transmembrane transport and the ATP synthase. The cytochrome b-c1 complex catalyzes electron transfer from ubiquinol to cytochrome c, linking this redox reaction to translocation of protons across the mitochondrial inner membrane, with protons being carried across the membrane as hydrogens on the quinol. In the process called Q cycle, 2 protons are consumed from the matrix, 4 protons are released into the intermembrane space and 2 electrons are passed to cytochrome c. The Rieske protein is a catalytic core subunit containing a [2Fe-2S] iron-sulfur cluster. It cycles between 2 conformational states during catalysis to transfer electrons from the quinol bound in the Q(0) site in cytochrome b to cytochrome c1. Incorporation of UQCRFS1 is the penultimate step in complex III assembly. Functionally, component of the ubiquinol-cytochrome c oxidoreductase (cytochrome b-c1 complex, complex III, CIII). UQCRFS1 undergoes proteolytic processing once it is incorporated in the complex III dimer. One of the fragments, called subunit 9, corresponds to its mitochondrial targeting sequence (MTS). The proteolytic processing is necessary for the correct insertion of UQCRFS1 in the complex III dimer, but the persistence of UQCRFS1-derived fragments may prevent newly imported UQCRFS1 to be processed and assembled into complex III and is detrimental for the complex III structure and function. The polypeptide is Cytochrome b-c1 complex subunit Rieske, mitochondrial (UQCRFS1) (Lagothrix lagotricha (Brown woolly monkey)).